We begin with the raw amino-acid sequence, 66 residues long: Large ribosomal subunit protein bL35 (66 aa).

It belongs to the bacterial ribosomal protein bL35 family.

This is Large ribosomal subunit protein bL35 from Treponema pallidum (strain Nichols).